Here is a 121-residue protein sequence, read N- to C-terminus: Large ribosomal subunit protein uL24 (121 aa).

It belongs to the universal ribosomal protein uL24 family. In terms of assembly, part of the 50S ribosomal subunit.

One of two assembly initiator proteins, it binds directly to the 5'-end of the 23S rRNA, where it nucleates assembly of the 50S subunit. In terms of biological role, located at the polypeptide exit tunnel on the outside of the subunit. In Pyrococcus abyssi (strain GE5 / Orsay), this protein is Large ribosomal subunit protein uL24.